Reading from the N-terminus, the 185-residue chain is Prenylated Rab acceptor protein 1 (185 aa).

Topologically, residues 1–78 are cytoplasmic; it reads MAAQKDQQKD…RNVEYYQSNY (78 aa). The required for interaction with prenylated RAB3A and VAMP2 stretch occupies residues 30-54; sequence AGREWLERRRATIRPWSTFVDQQRF. The next 2 membrane-spanning stretches (helical) occupy residues 79–94 and 95–112; these read VFVF…VTSP and MLLV…ILYL. The Cytoplasmic portion of the chain corresponds to 113–131; the sequence is RTLESKLVLFGREVSPAHQ. A run of 2 helical transmembrane segments spans residues 132-148 and 149-165; these read YALA…LAGA and GSAV…VIGS. Positions 165-185 are required for interaction with GDI1; that stretch reads SHAAFHQIEAVDGEELQMEPV. The Cytoplasmic segment spans residues 166-185; sequence HAAFHQIEAVDGEELQMEPV. Positions 175–185 are required for interaction with prenylated RAB3A and VAMP2; the sequence is VDGEELQMEPV. The segment at 175–185 is homodimerization; sequence VDGEELQMEPV.

The protein belongs to the PRA1 family. Homodimer. Interacts with VAMP2 (synaptobrevin-2), GDI1, and PCLO. Interacts specifically with prenylated Rab proteins; strongly with RAB4B, RAB5A and RAB5C, and weakly with RAB4A, RAB6, RAB7A, RAB17 and RAB22. Interacts with NDRG1. In terms of tissue distribution, ubiquitous. Strongest expression found in placenta, pituitary gland, kidney, lung and stomach.

It localises to the cell membrane. The protein resides in the cytoplasm. It is found in the golgi apparatus. Its subcellular location is the cytoplasmic vesicle. The protein localises to the secretory vesicle. It localises to the synaptic vesicle. In terms of biological role, general Rab protein regulator required for vesicle formation from the Golgi complex. May control vesicle docking and fusion by mediating the action of Rab GTPases to the SNARE complexes. In addition it inhibits the removal of Rab GTPases from the membrane by GDI. In Homo sapiens (Human), this protein is Prenylated Rab acceptor protein 1 (RABAC1).